A 235-amino-acid polypeptide reads, in one-letter code: Proteasome subunit alpha (235 aa).

The protein belongs to the peptidase T1A family. In terms of assembly, the 20S proteasome core is composed of 14 alpha and 14 beta subunits that assemble into four stacked heptameric rings, resulting in a barrel-shaped structure. The two inner rings, each composed of seven catalytic beta subunits, are sandwiched by two outer rings, each composed of seven alpha subunits. The catalytic chamber with the active sites is on the inside of the barrel. Has a gated structure, the ends of the cylinder being occluded by the N-termini of the alpha-subunits. Is capped by the proteasome-associated ATPase, ARC.

It localises to the cytoplasm. The protein operates within protein degradation; proteasomal Pup-dependent pathway. With respect to regulation, the formation of the proteasomal ATPase ARC-20S proteasome complex, likely via the docking of the C-termini of ARC into the intersubunit pockets in the alpha-rings, may trigger opening of the gate for substrate entry. Interconversion between the open-gate and close-gate conformations leads to a dynamic regulation of the 20S proteasome proteolysis activity. In terms of biological role, component of the proteasome core, a large protease complex with broad specificity involved in protein degradation. This Paenarthrobacter aurescens (strain TC1) protein is Proteasome subunit alpha.